The sequence spans 268 residues: Tryptophan synthase alpha chain (268 aa).

Catalysis depends on proton acceptor residues E49 and D60.

It belongs to the TrpA family. In terms of assembly, tetramer of two alpha and two beta chains.

The catalysed reaction is (1S,2R)-1-C-(indol-3-yl)glycerol 3-phosphate + L-serine = D-glyceraldehyde 3-phosphate + L-tryptophan + H2O. The protein operates within amino-acid biosynthesis; L-tryptophan biosynthesis; L-tryptophan from chorismate: step 5/5. The alpha subunit is responsible for the aldol cleavage of indoleglycerol phosphate to indole and glyceraldehyde 3-phosphate. The polypeptide is Tryptophan synthase alpha chain (Pectobacterium atrosepticum (strain SCRI 1043 / ATCC BAA-672) (Erwinia carotovora subsp. atroseptica)).